A 315-amino-acid polypeptide reads, in one-letter code: Tyrosine recombinase XerC (315 aa).

Residues 13–104 (ADLAAAREEW…GVRSLLRHLE (92 aa)) enclose the Core-binding (CB) domain. One can recognise a Tyr recombinase domain in the interval 125–309 (SLPKPLTADD…DTQRLLEVYD (185 aa)). Active-site residues include R168, K193, H261, R264, and H287. The O-(3'-phospho-DNA)-tyrosine intermediate role is filled by Y296.

This sequence belongs to the 'phage' integrase family. XerC subfamily. In terms of assembly, forms a cyclic heterotetrameric complex composed of two molecules of XerC and two molecules of XerD.

The protein resides in the cytoplasm. Its function is as follows. Site-specific tyrosine recombinase, which acts by catalyzing the cutting and rejoining of the recombining DNA molecules. The XerC-XerD complex is essential to convert dimers of the bacterial chromosome into monomers to permit their segregation at cell division. It also contributes to the segregational stability of plasmids. This Brucella suis biovar 1 (strain 1330) protein is Tyrosine recombinase XerC.